The chain runs to 350 residues: Methionine import ATP-binding protein MetN (350 aa).

The ABC transporter domain occupies 9-245; it reads LKDVDVEFHG…PQQQLTKDFI (237 aa). Residue 43 to 50 coordinates ATP; the sequence is GYSGAGKS.

Belongs to the ABC transporter superfamily. Methionine importer (TC 3.A.1.24) family. In terms of assembly, the complex is composed of two ATP-binding proteins (MetN), two transmembrane proteins (MetI) and a solute-binding protein (MetQ).

It is found in the cell membrane. It catalyses the reaction L-methionine(out) + ATP + H2O = L-methionine(in) + ADP + phosphate + H(+). The catalysed reaction is D-methionine(out) + ATP + H2O = D-methionine(in) + ADP + phosphate + H(+). Part of the ABC transporter complex MetNIQ involved in methionine import. Responsible for energy coupling to the transport system. This Lacticaseibacillus paracasei (strain ATCC 334 / BCRC 17002 / CCUG 31169 / CIP 107868 / KCTC 3260 / NRRL B-441) (Lactobacillus paracasei) protein is Methionine import ATP-binding protein MetN.